The chain runs to 231 residues: 7-cyano-7-deazaguanine synthase (231 aa).

Residue phenylalanine 8 to leucine 18 coordinates ATP. Cysteine 188, cysteine 197, cysteine 200, and cysteine 203 together coordinate Zn(2+).

It belongs to the QueC family. Zn(2+) serves as cofactor.

The enzyme catalyses 7-carboxy-7-deazaguanine + NH4(+) + ATP = 7-cyano-7-deazaguanine + ADP + phosphate + H2O + H(+). The protein operates within purine metabolism; 7-cyano-7-deazaguanine biosynthesis. Functionally, catalyzes the ATP-dependent conversion of 7-carboxy-7-deazaguanine (CDG) to 7-cyano-7-deazaguanine (preQ(0)). The protein is 7-cyano-7-deazaguanine synthase of Salmonella arizonae (strain ATCC BAA-731 / CDC346-86 / RSK2980).